Consider the following 66-residue polypeptide: MAFLKKSLFLVLFLGLVSLSICEEEKRETEEEEHDQEEDDKSEEKRFLSLIPHIVSGVASLAKHFG.

The first 22 residues, methionine 1–cysteine 22, serve as a signal peptide directing secretion. Residues glutamate 23–arginine 46 constitute a propeptide that is removed on maturation. The tract at residues glutamate 25–glutamate 44 is disordered. Residues glutamate 30–lysine 41 show a composition bias toward acidic residues. At phenylalanine 65 the chain carries Phenylalanine amide.

As to expression, expressed by the skin glands.

Its subcellular location is the secreted. It is found in the target cell membrane. In terms of biological role, antimicrobial peptide with high activity against Gram-positive bacteria, moderate activity against Gram-negative bacteria, and moderate activity against fungi. Acts by causing bacterial membrane disruption inducing leakage of the intracellular content followed by cell death. It adopts an alpha-helical amphipathic structure in membrane environments. Also shows highly potent antiparasitic activity against Leishmania species. Shows moderate hemolytic activity on human erythrocytes (LC(50)=25 uM). Is also active on human monocytes (IC(50)=22.5 uM). The sequence is that of Phylloseptin-S2 from Phyllomedusa sauvagei (Sauvage's leaf frog).